We begin with the raw amino-acid sequence, 359 residues long: 2-epi-5-epi-valiolone 7-kinase (359 aa).

A disordered region spans residues 28–48 (GGLGEVHTTPSPGHARRPGAG).

The protein belongs to the ROK (NagC/XylR) family.

The enzyme catalyses 2-epi-5-epi-valiolone + ATP = 2-epi-5-epi-valiolone 7-phosphate + ADP + H(+). Its function is as follows. Catalyzes the conversion of 2-epi-5-epi-valiolone to 2-epi-5-epi-valiolone 7-phosphate. Involved in the biosynthesis of the acarviose moiety of the alpha-glucosidase inhibitor acarbose. This is 2-epi-5-epi-valiolone 7-kinase from Actinoplanes sp. (strain ATCC 31044 / CBS 674.73 / SE50/110).